The primary structure comprises 163 residues: Putative pre-16S rRNA nuclease (163 aa).

Belongs to the YqgF nuclease family.

It is found in the cytoplasm. Its function is as follows. Could be a nuclease involved in processing of the 5'-end of pre-16S rRNA. This is Putative pre-16S rRNA nuclease from Rhodopseudomonas palustris (strain BisB18).